A 298-amino-acid polypeptide reads, in one-letter code: Protease HtpX homolog (298 aa).

The next 2 membrane-spanning stretches (helical) occupy residues 14–34 (VVLL…AGYL) and 39–59 (YAMG…SMIF). A Zn(2+)-binding site is contributed by H143. The active site involves E144. H147 is a Zn(2+) binding site. Transmembrane regions (helical) follow at residues 158 to 178 (IAVA…RMLW) and 197 to 217 (IITL…ASLI). A Zn(2+)-binding site is contributed by E226.

Belongs to the peptidase M48B family. Zn(2+) is required as a cofactor.

The protein resides in the cell membrane. The chain is Protease HtpX homolog from Streptococcus pyogenes serotype M49 (strain NZ131).